A 209-amino-acid chain; its full sequence is tRNA (guanine-N(7)-)-methyltransferase (209 aa).

Positions 35, 60, 87, and 113 each coordinate S-adenosyl-L-methionine. Asp113 is a catalytic residue. Substrate is bound by residues Lys117 and Asp149.

The protein belongs to the class I-like SAM-binding methyltransferase superfamily. TrmB family.

It catalyses the reaction guanosine(46) in tRNA + S-adenosyl-L-methionine = N(7)-methylguanosine(46) in tRNA + S-adenosyl-L-homocysteine. It functions in the pathway tRNA modification; N(7)-methylguanine-tRNA biosynthesis. Functionally, catalyzes the formation of N(7)-methylguanine at position 46 (m7G46) in tRNA. This Prochlorococcus marinus subsp. pastoris (strain CCMP1986 / NIES-2087 / MED4) protein is tRNA (guanine-N(7)-)-methyltransferase.